Here is a 318-residue protein sequence, read N- to C-terminus: Aquaporin-1 (318 aa).

Positions 1 to 16 (MVQFGSRANTNMTGLP) are enriched in polar residues. A disordered region spans residues 1–27 (MVQFGSRANTNMTGLPTEQAVEDRRVG). Residues 1–36 (MVQFGSRANTNMTGLPTEQAVEDRRVGNPKRDRMRN) lie on the Cytoplasmic side of the membrane. A helical membrane pass occupies residues 37–57 (ALVIVLGEFCGTFMFLLLSFI). Topologically, residues 58–77 (GAQTALVTNSPSDAGSPLLP) are extracellular. The helical transmembrane segment at 78–98 (FSLMYIAASFGTALAVNVWIF) threads the bilayer. Topologically, residues 99–108 (YRVSGGMFNP) are cytoplasmic. The NPA 1 motif lies at 107-109 (NPA). A helical membrane pass occupies residues 109 to 129 (AVTLGLVLVGAVTPIHALLII). Residues 130 to 165 (PTQLVAAITAAGITDALLPGKLLVTNALGNGTSVAQ) lie on the Extracellular side of the membrane. Residue Asn159 is glycosylated (N-linked (GlcNAc...) asparagine). The helical transmembrane segment at 166-186 (GVFIEMFLTSQLVLTVYFLAV) threads the bilayer. Residues 187-193 (EKHRSTH) are Cytoplasmic-facing. Residues 194–214 (LAPIGIGISVFIAHICATNWT) form a helical membrane-spanning segment. Residues 215 to 236 (GTSINPARSFGPSVVAGFHGYD) lie on the Extracellular side of the membrane. The NPA 2 signature appears at 219–221 (NPA). A helical transmembrane segment spans residues 237 to 257 (WIYYIGPFMGSLLAFGCYKIF). Residues 258–318 (KVLEYQTANP…NDSVIDDQMV (61 aa)) are Cytoplasmic-facing. Positions 268 to 318 (GQDDDNLDRSGHHHFFGHRKEPMPHTHTDNIEPKDHGVPQRNDSVIDDQMV) are disordered. Residues 285–305 (HRKEPMPHTHTDNIEPKDHGV) show a composition bias toward basic and acidic residues.

This sequence belongs to the MIP/aquaporin (TC 1.A.8) family.

Its subcellular location is the nucleus membrane. It catalyses the reaction H2O(in) = H2O(out). In terms of biological role, probable water channel involved in responses to changes in environmental conditions and conidiation. Involved in responses to hyperosmotic conditions, oxidative stress and cell wall destabilization. Also required for proper transcriptional activation of genes involved in aurofusarin biosynthesis. Not involved in pathogenicity, but negatively regulates deoxynivalenol (DON) production. This Gibberella zeae (strain ATCC MYA-4620 / CBS 123657 / FGSC 9075 / NRRL 31084 / PH-1) (Wheat head blight fungus) protein is Aquaporin-1.